Here is a 310-residue protein sequence, read N- to C-terminus: Protoheme IX farnesyltransferase (310 aa).

Transmembrane regions (helical) follow at residues 30 to 47 (VTTLIVMTAWTGAFFGAA), 50 to 70 (GLPLVSWTLFHALLGIGLVSG), 102 to 122 (LGHGMVVSLVMMIGGAGYLGL), 126 to 146 (WLTAALALMTSVVYLMAYTPL), 152 to 172 (ICTTIGAFPGAMPPVLGWTAI), 181 to 201 (VALFAILFFWQFPHFHSIAWL), 228 to 248 (IVIYAAFLLPITLTPFLLRFA), 251 to 271 (IYFLAALVLGSMLFWVSLRMF), and 286 to 306 (ARQLLLASVTYLPLLFAVMML).

This sequence belongs to the UbiA prenyltransferase family. Protoheme IX farnesyltransferase subfamily.

It is found in the cell inner membrane. The catalysed reaction is heme b + (2E,6E)-farnesyl diphosphate + H2O = Fe(II)-heme o + diphosphate. It functions in the pathway porphyrin-containing compound metabolism; heme O biosynthesis; heme O from protoheme: step 1/1. Its function is as follows. Converts heme B (protoheme IX) to heme O by substitution of the vinyl group on carbon 2 of heme B porphyrin ring with a hydroxyethyl farnesyl side group. This Koribacter versatilis (strain Ellin345) protein is Protoheme IX farnesyltransferase.